The following is a 481-amino-acid chain: 7-deoxyloganetin glucosyltransferase (481 aa).

The active-site Proton acceptor is the His-22. His-22 is a binding site for an anthocyanidin. Asp-126 (charge relay) is an active-site residue. Residues Thr-148, Gln-363, His-378, Trp-381, Asn-382, Ser-383, and Glu-386 each coordinate UDP-alpha-D-glucose. An anthocyanidin is bound at residue Ala-401. UDP-alpha-D-glucose contacts are provided by Glu-402 and Gln-403.

The protein belongs to the UDP-glycosyltransferase family. In terms of tissue distribution, ubiquitous. Very low expression in stems.

The enzyme catalyses 7-deoxyloganetin + UDP-alpha-D-glucose = 7-deoxyloganin + UDP + H(+). Its function is as follows. Iridoid glucosyltransferase acting on genipin and 7-deoxyloganetin. No activity with 7-deoxyloganetic acid. Involved in geniposide biosynthesis. The sequence is that of 7-deoxyloganetin glucosyltransferase (UGT85A24) from Gardenia jasminoides (Cape jasmine).